Here is a 124-residue protein sequence, read N- to C-terminus: UPF0102 protein TM1040_0449 (124 aa).

This sequence belongs to the UPF0102 family.

In Ruegeria sp. (strain TM1040) (Silicibacter sp.), this protein is UPF0102 protein TM1040_0449.